An 80-amino-acid chain; its full sequence is Exodeoxyribonuclease 7 small subunit (80 aa).

Belongs to the XseB family. As to quaternary structure, heterooligomer composed of large and small subunits.

The protein resides in the cytoplasm. The catalysed reaction is Exonucleolytic cleavage in either 5'- to 3'- or 3'- to 5'-direction to yield nucleoside 5'-phosphates.. Functionally, bidirectionally degrades single-stranded DNA into large acid-insoluble oligonucleotides, which are then degraded further into small acid-soluble oligonucleotides. The protein is Exodeoxyribonuclease 7 small subunit of Phenylobacterium zucineum (strain HLK1).